The chain runs to 222 residues: MKKHLLPLALLLSGISPAQALDVGDISSFMNSDSSTLSKTIKNSTDSGRLINIRLERLSSPLDDGQVIAMDKPDELLLTPASLLLPAQASEVIRFFYKGPADEKERYYRIVWFDQALSDAQRDNANRSAVATASARIGTILVVAPRQANYHFQYANGSLTNTGNATLRILAYGPCLKAANGKECKENYYLMPGKSRRFTRVDTADNKGRVALWQGDKFIPVK.

A signal peptide spans 1–20 (MKKHLLPLALLLSGISPAQA).

It belongs to the EcpB/EcpE family.

Part of the ecpRABCDE operon, which encodes the E.coli common pilus (ECP). ECP is found in both commensal and pathogenic strains and plays a dual role in early-stage biofilm development and host cell recognition. This is Probable fimbrial chaperone EcpB (ecpB) from Escherichia coli O7:K1 (strain IAI39 / ExPEC).